Consider the following 316-residue polypeptide: MEVIKITPRGYCYGVVDAMVIARNAALDPSLPRPIYILGMIVHNKHVTDAFAEEGIITLDGENRLEILEKIDQGTVIFTAHGVSPEVKKRALEKGLVTIDATCPDVTKTHRLIEQKLADGYDIIYIGKKGHPEPEGAVGINPERIHLVETIDDVERLSIHNERIMVTNQTTMSQWDVADIMAKVKEKYPHVEMHKEICLATQLRQEAVAEQAKEADVTIVVGDPRSNNSNRLAQVSEEIAGTKAYRVADVTEIDINWIKDAKKVAVTAGASTPTPITKEVIDFLEQFDPNDPSTWKRERKVPLQKILPKVKTKKEE.

[4Fe-4S] cluster is bound at residue C12. H43 and H81 together coordinate (2E)-4-hydroxy-3-methylbut-2-enyl diphosphate. Residues H43 and H81 each contribute to the dimethylallyl diphosphate site. Residues H43 and H81 each contribute to the isopentenyl diphosphate site. C103 is a binding site for [4Fe-4S] cluster. Position 131 (H131) interacts with (2E)-4-hydroxy-3-methylbut-2-enyl diphosphate. Dimethylallyl diphosphate is bound at residue H131. H131 lines the isopentenyl diphosphate pocket. Catalysis depends on E133, which acts as the Proton donor. Position 170 (T170) interacts with (2E)-4-hydroxy-3-methylbut-2-enyl diphosphate. Position 198 (C198) interacts with [4Fe-4S] cluster. (2E)-4-hydroxy-3-methylbut-2-enyl diphosphate-binding residues include S226, N228, and S271. Dimethylallyl diphosphate-binding residues include S226, N228, and S271. Positions 226, 228, and 271 each coordinate isopentenyl diphosphate.

This sequence belongs to the IspH family. It depends on [4Fe-4S] cluster as a cofactor.

It carries out the reaction isopentenyl diphosphate + 2 oxidized [2Fe-2S]-[ferredoxin] + H2O = (2E)-4-hydroxy-3-methylbut-2-enyl diphosphate + 2 reduced [2Fe-2S]-[ferredoxin] + 2 H(+). The catalysed reaction is dimethylallyl diphosphate + 2 oxidized [2Fe-2S]-[ferredoxin] + H2O = (2E)-4-hydroxy-3-methylbut-2-enyl diphosphate + 2 reduced [2Fe-2S]-[ferredoxin] + 2 H(+). Its pathway is isoprenoid biosynthesis; dimethylallyl diphosphate biosynthesis; dimethylallyl diphosphate from (2E)-4-hydroxy-3-methylbutenyl diphosphate: step 1/1. It participates in isoprenoid biosynthesis; isopentenyl diphosphate biosynthesis via DXP pathway; isopentenyl diphosphate from 1-deoxy-D-xylulose 5-phosphate: step 6/6. Its function is as follows. Catalyzes the conversion of 1-hydroxy-2-methyl-2-(E)-butenyl 4-diphosphate (HMBPP) into a mixture of isopentenyl diphosphate (IPP) and dimethylallyl diphosphate (DMAPP). Acts in the terminal step of the DOXP/MEP pathway for isoprenoid precursor biosynthesis. This is 4-hydroxy-3-methylbut-2-enyl diphosphate reductase from Geobacillus kaustophilus (strain HTA426).